A 549-amino-acid polypeptide reads, in one-letter code: DNA 3'-5' helicase XPB (549 aa).

A required for protein stability or solubility region spans residues 1 to 130; the sequence is MTDGPLIVQS…RNKKIAPMLG (130 aa). Residues 190–344 form the Helicase ATP-binding domain; it reads ADSFWAGGSG…DVFSLIGPKR (155 aa). 203–210 is an ATP binding site; sequence LPCGAGKT. The short motif at 298 to 301 is the DEAH box element; it reads DEVH. One can recognise a Helicase C-terminal domain in the interval 399-545; that stretch reads VVKSILAKHP…YIIRDADDLL (147 aa).

It belongs to the helicase family. RAD25/XPB subfamily. In terms of assembly, monomer. The cofactor is Mn(2+). Mg(2+) serves as cofactor.

The enzyme catalyses Couples ATP hydrolysis with the unwinding of duplex DNA by translocating in the 3'-5' direction.. It carries out the reaction ATP + H2O = ADP + phosphate + H(+). In terms of biological role, ATP-dependent 3'-5' DNA helicase, unwinds 3'-overhangs, 3'- flaps, and splayed-arm DNA substrates but not 5'-overhangs, 5'-flap substrates, 3-way junctions or Holliday junctions. Not highly efficient in vitro. Requires ATP hydrolysis for helicase activity; the ATPase activity is DNA-dependent and requires a minimum of 4 single-stranded nucleotides (nt) with 6-10 nt providing all necessary interactions for full processive unwinding. The ATPase prefers ATP over CTP or GTP, is almost inactive with TTP. DNA helicase activity requires ATP or dATP and only acts when the 3'-overhang is &gt;20 nt. Capable of unwinding a DNA:RNA hybrid if the 3'-overhang is DNA. Also catalyzes ATP-independent annealing of complementary DNA strands; annealing requires Mg(2+). This is DNA 3'-5' helicase XPB from Mycobacterium tuberculosis (strain ATCC 25618 / H37Rv).